Reading from the N-terminus, the 110-residue chain is Carboxysome shell protein CsoS1B (110 aa).

The BMC domain maps to 8–93 (ALGMIETRGL…VHSEVEIILP (86 aa)).

Belongs to the bacterial microcompartments protein family. CsoS1 subfamily. As to quaternary structure, homohexamer with a small central pore. Interacts with the N-terminus (residues 1-136) of RuBisCO (CbbL).

Its subcellular location is the carboxysome. One of shell proteins of the carboxysome, a polyhedral inclusion where RuBisCO (ribulose bisphosphate carboxylase, ccbL-ccbS) is sequestered. Assembles into hexamers which make sheets that form the facets of the polyhedral carboxysome. The shell probably limits the diffusion of CO(2) into and out of the carboxysome. There are estimated to be 540 CsoS1B proteins per carboxysome. Its function is as follows. Unlike beta-carboxysomes, alpha-carboxysomes (Cb) can form without cargo protein. CsoS2 is essential for Cb formation and is also capable of targeting foreign proteins to the Cb. The Cb shell assembles with the aid of CsoS2; CsoS1A, CsoS1B and CsoS1C form the majority of the shell while CsoS4A and CsoS4B form vertices. CsoS1D forms pseudohexamers that probably control metabolite flux into and out of the shell. In Halothiobacillus neapolitanus (strain ATCC 23641 / c2) (Thiobacillus neapolitanus), this protein is Carboxysome shell protein CsoS1B.